We begin with the raw amino-acid sequence, 396 residues long: Elongation factor Tu 2 (396 aa).

In terms of domain architecture, tr-type G spans 10-206 (KPHCNVGTIG…AVDDYIPQPE (197 aa)). The G1 stretch occupies residues 19 to 26 (GHVDHGKT). 19–26 (GHVDHGKT) is a GTP binding site. Thr26 is a binding site for Mg(2+). Residues 60 to 64 (GITIS) form a G2 region. Positions 81–84 (DCPG) are G3. Residues 81 to 85 (DCPGH) and 136 to 139 (NKCD) each bind GTP. The tract at residues 136–139 (NKCD) is G4. The segment at 174–176 (SAL) is G5.

The protein belongs to the TRAFAC class translation factor GTPase superfamily. Classic translation factor GTPase family. EF-Tu/EF-1A subfamily. In terms of assembly, monomer.

It is found in the cytoplasm. It catalyses the reaction GTP + H2O = GDP + phosphate + H(+). GTP hydrolase that promotes the GTP-dependent binding of aminoacyl-tRNA to the A-site of ribosomes during protein biosynthesis. This is Elongation factor Tu 2 from Rhodospirillum rubrum (strain ATCC 11170 / ATH 1.1.1 / DSM 467 / LMG 4362 / NCIMB 8255 / S1).